The chain runs to 400 residues: Pectinesterase B (400 aa).

Substrate contacts are provided by Thr171 and Gln205. The active-site Proton donor is Asp228. Asp261 acts as the Nucleophile in catalysis. Substrate contacts are provided by Arg325 and Trp327.

It belongs to the pectinesterase family.

It catalyses the reaction [(1-&gt;4)-alpha-D-galacturonosyl methyl ester](n) + n H2O = [(1-&gt;4)-alpha-D-galacturonosyl](n) + n methanol + n H(+). It functions in the pathway glycan metabolism; pectin degradation; 2-dehydro-3-deoxy-D-gluconate from pectin: step 1/5. The polypeptide is Pectinesterase B (pemB) (Pectobacterium parmentieri).